The following is a 447-amino-acid chain: Peptide-N(4)-(N-acetyl-beta-glucosaminyl)asparagine amidase (447 aa).

Zn(2+) contacts are provided by Cys-209, Cys-212, Cys-241, and Cys-244. The Nucleophile role is filled by Cys-267. Residues His-294 and Asp-311 contribute to the active site.

Belongs to the transglutaminase-like superfamily. PNGase family. It depends on Zn(2+) as a cofactor.

The protein localises to the cytoplasm. It carries out the reaction Hydrolysis of an N(4)-(acetyl-beta-D-glucosaminyl)asparagine residue in which the glucosamine residue may be further glycosylated, to yield a (substituted) N-acetyl-beta-D-glucosaminylamine and a peptide containing an aspartate residue.. Specifically deglycosylates the denatured form of N-linked glycoproteins in the cytoplasm and assists their proteasome-mediated degradation. Cleaves the beta-aspartyl-glucosamine (GlcNAc) of the glycan and the amide side chain of Asn, converting Asn to Asp. Prefers proteins containing high-mannose over those bearing complex type oligosaccharides. Can recognize misfolded proteins in the endoplasmic reticulum that are exported to the cytosol to be destroyed and deglycosylate them, while it has no activity toward native proteins. Deglycosylation is a prerequisite for subsequent proteasome-mediated degradation of some, but not all, misfolded glycoproteins. In Oryza sativa subsp. japonica (Rice), this protein is Peptide-N(4)-(N-acetyl-beta-glucosaminyl)asparagine amidase (PNG1).